The primary structure comprises 511 residues: Cytochrome P450 89A9 (511 aa).

A helical; Signal-anchor for type II membrane protein transmembrane segment spans residues 6–26 (IIFLIISSLTFSIFLKLIFFF). Cys-454 serves as a coordination point for heme.

This sequence belongs to the cytochrome P450 family. Requires heme as cofactor.

The protein resides in the endoplasmic reticulum membrane. It carries out the reaction primary fluorescent chlorophyll catabolite + reduced [NADPH--hemoprotein reductase] + O2 = primary fluorescent dioxobilin-type chlorophyll catabolite + formate + oxidized [NADPH--hemoprotein reductase] + 2 H(+). The protein operates within porphyrin-containing compound metabolism; chlorophyll degradation. Its function is as follows. Involved in the chlorophyll breakdown by its action in nonpolar primary fluorescent chlorophyll catabolite (pFCC) decarbonylation. Involved in the formation of major chlorophyll breakdown products, including non-fluorescent dioxobilin-type chlorophyll catabolites (NDCCs), during leaf senescence. The chain is Cytochrome P450 89A9 from Arabidopsis thaliana (Mouse-ear cress).